We begin with the raw amino-acid sequence, 190 residues long: ATP synthase subunit b, chloroplastic (190 aa).

A helical membrane pass occupies residues 35–55 (LSVVLGVLIFFGKGVCASCLL).

It belongs to the ATPase B chain family. F-type ATPases have 2 components, F(1) - the catalytic core - and F(0) - the membrane proton channel. F(1) has five subunits: alpha(3), beta(3), gamma(1), delta(1), epsilon(1). F(0) has four main subunits: a(1), b(1), b'(1) and c(10-14). The alpha and beta chains form an alternating ring which encloses part of the gamma chain. F(1) is attached to F(0) by a central stalk formed by the gamma and epsilon chains, while a peripheral stalk is formed by the delta, b and b' chains.

The protein localises to the plastid. The protein resides in the chloroplast thylakoid membrane. F(1)F(0) ATP synthase produces ATP from ADP in the presence of a proton or sodium gradient. F-type ATPases consist of two structural domains, F(1) containing the extramembraneous catalytic core and F(0) containing the membrane proton channel, linked together by a central stalk and a peripheral stalk. During catalysis, ATP synthesis in the catalytic domain of F(1) is coupled via a rotary mechanism of the central stalk subunits to proton translocation. In terms of biological role, component of the F(0) channel, it forms part of the peripheral stalk, linking F(1) to F(0). The sequence is that of ATP synthase subunit b, chloroplastic from Coffea arabica (Arabian coffee).